We begin with the raw amino-acid sequence, 142 residues long: Profilin (142 aa).

Belongs to the profilin family. In terms of assembly, occurs in many kinds of cells as a complex with monomeric actin in a 1:1 ratio. In terms of tissue distribution, expressed specifically in coelomocytes in response to injury.

It localises to the cytoplasm. The protein resides in the cytoskeleton. Its function is as follows. Binds to actin and affects the structure of the cytoskeleton. At high concentrations, profilin prevents the polymerization of actin, whereas it enhances it at low concentrations. By binding to PIP2, it inhibits the formation of IP3 and DG. The protein is Profilin of Strongylocentrotus purpuratus (Purple sea urchin).